A 479-amino-acid chain; its full sequence is Cardiolipin synthase A (479 aa).

2 consecutive transmembrane segments (helical) span residues 8–28 and 38–58; these read FFGY…LHAV and IAWA…YLVF. 2 consecutive PLD phosphodiesterase domains span residues 218-245 and 392-419; these read VNFR…GDEY and QPGF…DNRS. Residues His223, Lys225, Asp230, His397, Lys399, and Asp404 contribute to the active site.

It belongs to the phospholipase D family. Cardiolipin synthase subfamily. ClsA sub-subfamily.

The protein resides in the cell inner membrane. The catalysed reaction is 2 a 1,2-diacyl-sn-glycero-3-phospho-(1'-sn-glycerol) = a cardiolipin + glycerol. In terms of biological role, catalyzes the reversible phosphatidyl group transfer from one phosphatidylglycerol molecule to another to form cardiolipin (CL) (diphosphatidylglycerol) and glycerol. This Pseudomonas putida (strain W619) protein is Cardiolipin synthase A.